A 166-amino-acid polypeptide reads, in one-letter code: Probable chemoreceptor glutamine deamidase CheD (166 aa).

Belongs to the CheD family.

The catalysed reaction is L-glutaminyl-[protein] + H2O = L-glutamyl-[protein] + NH4(+). In terms of biological role, probably deamidates glutamine residues to glutamate on methyl-accepting chemotaxis receptors (MCPs), playing an important role in chemotaxis. This is Probable chemoreceptor glutamine deamidase CheD from Oceanobacillus iheyensis (strain DSM 14371 / CIP 107618 / JCM 11309 / KCTC 3954 / HTE831).